Reading from the N-terminus, the 163-residue chain is Choriogonadotropin subunit beta variant 2 (163 aa).

The signal sequence occupies residues Met1 to Ala18. Disulfide bonds link Cys27/Cys75, Cys41/Cys90, Cys44/Cys128, Cys52/Cys106, Cys56/Cys108, and Cys111/Cys118. N-linked (GlcNAc...) asparagine glycans are attached at residues Asn31 and Asn48. The disordered stretch occupies residues Asp129 to Gln163. The segment covering Ala141–Leu152 has biased composition (pro residues).

The protein belongs to the glycoprotein hormones subunit beta family. As to expression, expressed in placenta, testis and pituitary.

The protein localises to the secreted. The polypeptide is Choriogonadotropin subunit beta variant 2 (CGB2) (Homo sapiens (Human)).